We begin with the raw amino-acid sequence, 598 residues long: Glutamine--fructose-6-phosphate aminotransferase [isomerizing] (598 aa).

Catalysis depends on cysteine 2, which acts as the Nucleophile; for GATase activity. The Glutamine amidotransferase type-2 domain occupies 2–218 (CGIVGYIGNN…DLSLGYASKD (217 aa)). SIS domains lie at 277–421 (VFDE…KRNL) and 450–588 (LSKR…VDMP). Lysine 593 functions as the For Fru-6P isomerization activity in the catalytic mechanism.

In terms of assembly, homodimer.

It localises to the cytoplasm. It carries out the reaction D-fructose 6-phosphate + L-glutamine = D-glucosamine 6-phosphate + L-glutamate. Functionally, catalyzes the first step in hexosamine metabolism, converting fructose-6P into glucosamine-6P using glutamine as a nitrogen source. The chain is Glutamine--fructose-6-phosphate aminotransferase [isomerizing] from Campylobacter jejuni subsp. jejuni serotype O:2 (strain ATCC 700819 / NCTC 11168).